Consider the following 438-residue polypeptide: Diaminopimelate decarboxylase (438 aa).

An N6-(pyridoxal phosphate)lysine modification is found at Lys-73. Pyridoxal 5'-phosphate-binding positions include Ser-217, Gly-254, and 294–297 (EPGR). Substrate contacts are provided by Arg-297, Arg-333, and Tyr-337. Cys-362 acts as the Proton donor in catalysis. 2 residues coordinate substrate: Glu-363 and Tyr-391. Tyr-391 lines the pyridoxal 5'-phosphate pocket.

The protein belongs to the Orn/Lys/Arg decarboxylase class-II family. LysA subfamily. Homodimer. It depends on pyridoxal 5'-phosphate as a cofactor.

It catalyses the reaction meso-2,6-diaminopimelate + H(+) = L-lysine + CO2. Its pathway is amino-acid biosynthesis; L-lysine biosynthesis via DAP pathway; L-lysine from DL-2,6-diaminopimelate: step 1/1. Its activity is regulated as follows. Competitively inhibited by the substrate analog azelaic acid in vitro but not in vivo. Functionally, specifically catalyzes the decarboxylation of meso-diaminopimelate (meso-DAP) to L-lysine. The sequence is that of Diaminopimelate decarboxylase from Methanocaldococcus jannaschii (strain ATCC 43067 / DSM 2661 / JAL-1 / JCM 10045 / NBRC 100440) (Methanococcus jannaschii).